Consider the following 598-residue polypeptide: Beta-galactosidase (598 aa).

The N-terminal stretch at 1–21 (MLRTTLAPLVLALALALPAAA) is a signal peptide. Glu184 acts as the Proton donor in catalysis. The active-site Nucleophile is Glu260.

It belongs to the glycosyl hydrolase 35 family.

The enzyme catalyses Hydrolysis of terminal non-reducing beta-D-galactose residues in beta-D-galactosides.. Preferentially hydrolyzes beta(1-&gt;3) galactosyl linkages over beta(1-&gt;4) linkages. In Xanthomonas manihotis, this protein is Beta-galactosidase (bga).